The chain runs to 254 residues: Triosephosphate isomerase (254 aa).

A substrate-binding site is contributed by 12–14 (NWK). Residue His-99 is the Electrophile of the active site. Glu-169 serves as the catalytic Proton acceptor. Residues Gly-175, Ser-214, and 235–236 (GG) contribute to the substrate site.

Belongs to the triosephosphate isomerase family. As to quaternary structure, homodimer.

Its subcellular location is the cytoplasm. The enzyme catalyses D-glyceraldehyde 3-phosphate = dihydroxyacetone phosphate. It functions in the pathway carbohydrate biosynthesis; gluconeogenesis. The protein operates within carbohydrate degradation; glycolysis; D-glyceraldehyde 3-phosphate from glycerone phosphate: step 1/1. Its function is as follows. Involved in the gluconeogenesis. Catalyzes stereospecifically the conversion of dihydroxyacetone phosphate (DHAP) to D-glyceraldehyde-3-phosphate (G3P). The protein is Triosephosphate isomerase of Bartonella henselae (strain ATCC 49882 / DSM 28221 / CCUG 30454 / Houston 1) (Rochalimaea henselae).